A 490-amino-acid chain; its full sequence is Betaine aldehyde dehydrogenase (490 aa).

K(+)-binding residues include I27 and D93. 150–152 (GAW) is an NAD(+) binding site. The active-site Charge relay system is K162. 176–179 (KPSE) is an NAD(+) binding site. Residue V180 participates in K(+) binding. 230-233 (GTDT) lines the NAD(+) pocket. L246 contributes to the K(+) binding site. The active-site Proton acceptor is the E252. NAD(+)-binding residues include G254, C286, and E387. C286 (nucleophile) is an active-site residue. C286 carries the post-translational modification Cysteine sulfenic acid (-SOH). The K(+) site is built by K457 and G460. E464 serves as the catalytic Charge relay system.

The protein belongs to the aldehyde dehydrogenase family. Dimer of dimers. The cofactor is K(+).

It catalyses the reaction betaine aldehyde + NAD(+) + H2O = glycine betaine + NADH + 2 H(+). Its pathway is amine and polyamine biosynthesis; betaine biosynthesis via choline pathway; betaine from betaine aldehyde: step 1/1. Functionally, involved in the biosynthesis of the osmoprotectant glycine betaine. Catalyzes the irreversible oxidation of betaine aldehyde to the corresponding acid. This is Betaine aldehyde dehydrogenase from Pseudomonas fluorescens (strain Pf0-1).